We begin with the raw amino-acid sequence, 156 residues long: Small ribosomal subunit protein uS7 (156 aa).

Belongs to the universal ribosomal protein uS7 family. As to quaternary structure, part of the 30S ribosomal subunit. Contacts proteins S9 and S11.

One of the primary rRNA binding proteins, it binds directly to 16S rRNA where it nucleates assembly of the head domain of the 30S subunit. Is located at the subunit interface close to the decoding center, probably blocks exit of the E-site tRNA. The polypeptide is Small ribosomal subunit protein uS7 (Streptococcus pneumoniae (strain Taiwan19F-14)).